The primary structure comprises 220 residues: Large ribosomal subunit protein uL16 (220 aa).

The protein belongs to the universal ribosomal protein uL16 family. In terms of assembly, component of the small ribosomal subunit. Mature ribosomes consist of a small (40S) and a large (60S) subunit. The 40S subunit contains about 33 different proteins and 1 molecule of RNA (18S). The 60S subunit contains about 49 different proteins and 3 molecules of RNA (25S, 5.8S and 5S).

The protein is Large ribosomal subunit protein uL16 (RPL10) of Vitis riparia (Frost grape).